Here is a 404-residue protein sequence, read N- to C-terminus: Cysteine desulfurase IscS (404 aa).

Pyridoxal 5'-phosphate is bound by residues 75 to 76 (AT), asparagine 155, glutamine 183, and 203 to 205 (SAH). N6-(pyridoxal phosphate)lysine is present on lysine 206. Threonine 243 lines the pyridoxal 5'-phosphate pocket. Catalysis depends on cysteine 328, which acts as the Cysteine persulfide intermediate. Residue cysteine 328 participates in [2Fe-2S] cluster binding.

It belongs to the class-V pyridoxal-phosphate-dependent aminotransferase family. NifS/IscS subfamily. As to quaternary structure, homodimer. Forms a heterotetramer with IscU, interacts with other sulfur acceptors. Pyridoxal 5'-phosphate is required as a cofactor.

It localises to the cytoplasm. It catalyses the reaction (sulfur carrier)-H + L-cysteine = (sulfur carrier)-SH + L-alanine. It participates in cofactor biosynthesis; iron-sulfur cluster biosynthesis. In terms of biological role, master enzyme that delivers sulfur to a number of partners involved in Fe-S cluster assembly, tRNA modification or cofactor biosynthesis. Catalyzes the removal of elemental sulfur atoms from cysteine to produce alanine. Functions as a sulfur delivery protein for Fe-S cluster synthesis onto IscU, an Fe-S scaffold assembly protein, as well as other S acceptor proteins. This Shewanella loihica (strain ATCC BAA-1088 / PV-4) protein is Cysteine desulfurase IscS.